We begin with the raw amino-acid sequence, 158 residues long: Endoribonuclease YbeY (158 aa).

3 residues coordinate Zn(2+): H119, H123, and D129.

Belongs to the endoribonuclease YbeY family. Zn(2+) serves as cofactor.

The protein resides in the cytoplasm. Functionally, single strand-specific metallo-endoribonuclease involved in late-stage 70S ribosome quality control and in maturation of the 3' terminus of the 16S rRNA. This chain is Endoribonuclease YbeY, found in Chlamydia felis (strain Fe/C-56) (Chlamydophila felis).